Consider the following 183-residue polypeptide: Caspase recruitment domain-containing protein 19 (183 aa).

A disulfide bridge links Cys-7 with Cys-77. The CARD domain occupies 8-99; it reads DRLVQDTPFL…PLHSCLPSRH (92 aa). Residues 122-142 traverse the membrane as a helical segment; sequence GPVAFLTCLGLAAGLALLIYC.

As to quaternary structure, associates with BCL10 by CARD-CARD interaction.

Its subcellular location is the endoplasmic reticulum membrane. The protein resides in the mitochondrion membrane. Functionally, plays a role in inhibiting the effects of BCL10-induced activation of NF-kappa-B. May inhibit the phosphorylation of BCL10 in a CARD-dependent manner. In Bos taurus (Bovine), this protein is Caspase recruitment domain-containing protein 19 (CARD19).